Reading from the N-terminus, the 393-residue chain is Lysine/ornithine decarboxylase (393 aa).

The residue at position 51 (lysine 51) is an N6-(pyridoxal phosphate)lysine. The Proton donor; shared with dimeric partner role is filled by cysteine 323.

The protein belongs to the Orn/Lys/Arg decarboxylase class-II family. Homodimer. Pyridoxal 5'-phosphate serves as cofactor.

It catalyses the reaction L-lysine + H(+) = cadaverine + CO2. The catalysed reaction is L-ornithine + H(+) = putrescine + CO2. It functions in the pathway amine and polyamine biosynthesis; putrescine biosynthesis via L-ornithine pathway; putrescine from L-ornithine: step 1/1. Inhibited competitively by both alpha-difluoromethyllysine and alpha-difluoromethylornithine. Functionally, decarboxylates both L-lysine and L-ornithine with similar catalytic efficiency. The protein is Lysine/ornithine decarboxylase (ldc) of Selenomonas ruminantium.